We begin with the raw amino-acid sequence, 1522 residues long: Adhesion G protein-coupled receptor B3 (1522 aa).

The first 25 residues, 1–25 (MKAVRNLLIYIFSTYLLVMFGFNAA), serve as a signal peptide directing secretion. Residues 26–880 (QDFWCSTLVK…MESSGTPSVT (855 aa)) lie on the Extracellular side of the membrane. The CUB domain maps to 30–159 (CSTLVKGVIY…KSFFEFLVLN (130 aa)). N-linked (GlcNAc...) asparagine glycosylation is found at Asn51, Asn54, Asn82, Asn105, and Asn241. TSP type-1 domains are found at residues 291 to 343 (ESGV…ALCP), 345 to 398 (HGVW…ALCP), 400 to 453 (DGQW…PECT), and 455 to 508 (NGQW…QRCP). 14 disulfide bridges follow: Cys303-Cys336, Cys307-Cys342, Cys318-Cys326, Cys357-Cys392, Cys361-Cys397, Cys372-Cys382, Cys412-Cys447, Cys416-Cys452, Cys427-Cys437, Cys467-Cys502, Cys471-Cys507, Cys482-Cys492, Cys514-Cys549, and Cys537-Cys567. Asn337 carries an N-linked (GlcNAc...) asparagine glycan. A glycan (N-linked (GlcNAc...) asparagine) is linked at Asn418. Asn540 carries an N-linked (GlcNAc...) asparagine glycan. A Phosphoserine modification is found at Ser619. N-linked (GlcNAc...) asparagine glycosylation is found at Asn625, Asn779, Asn812, and Asn828. Residues 693–869 (QNSYLMTGNV…AILAQQPREI (177 aa)) enclose the GAIN-B domain. 2 disulfide bridges follow: Cys819-Cys851 and Cys839-Cys853. Residues 819 to 869 (CVLWDDSKSNESLGTWSTQGCKTVLTDASHTKCLCDRLSTFAILAQQPREI) are GPS. Residues 881–901 (LIVGSGLSCLALITLAVVYAA) traverse the membrane as a helical segment. The Cytoplasmic portion of the chain corresponds to 902 to 910 (LWRYIRSER). A helical transmembrane segment spans residues 911 to 931 (SIILINFCLSIISSNILILVG). The Extracellular segment spans residues 932-939 (QTQTHNKS). Asn937 carries an N-linked (GlcNAc...) asparagine glycan. A helical transmembrane segment spans residues 940–960 (ICTTTTAFLHFFFLASFCWVL). Topologically, residues 961 to 981 (TEAWQSYMAVTGKIRTRLIRK) are cytoplasmic. A helical transmembrane segment spans residues 982–1002 (RFLCLGWGLPALVVATSVGFT). Residues 1003 to 1023 (RTKGYGTDHYCWLSLEGGLLY) are Extracellular-facing. A helical transmembrane segment spans residues 1024–1044 (AFVGPAAAVVLVNMVIGILVF). The Cytoplasmic segment spans residues 1045-1098 (NKLVSRDGILDKKLKHRAGQMSEPHSGLTLKCAKCGVVSTTALSATTASNAMAS). The chain crosses the membrane as a helical span at residues 1099–1119 (LWSSCVVLPLLALTWMSAVLA). Over 1120–1125 (MTDKRS) the chain is Extracellular. Residues 1126–1146 (ILFQILFAVFDSLQGFVIVMV) traverse the membrane as a helical segment. At 1147–1522 (HCILRREVQD…VQEGDFQTEV (376 aa)) the chain is on the cytoplasmic side. Phosphoserine is present on residues Ser1220 and Ser1411.

The protein belongs to the G-protein coupled receptor 2 family. Adhesion G-protein coupled receptor (ADGR) subfamily. As to quaternary structure, forms a heterodimer, consisting of a large extracellular region non-covalently linked to a seven-transmembrane moiety. Interacts (via its TSRs) with C1QL1, C1QL2, C1QL3 and C1QL4. Interacts via (C-terminus) with ELMO1, ELMO2 and ELMO3. In terms of processing, the endogenous protein is proteolytically cleaved into 2 subunits, an extracellular subunit and a seven-transmembrane subunit. Brain-specific expression.

The protein resides in the cell membrane. Its function is as follows. Receptor that plays a role in the regulation of synaptogenesis and dendritic spine formation at least partly via interaction with ELMO1 and RAC1 activity. Promotes myoblast fusion through ELMO/DOCK1. The protein is Adhesion G protein-coupled receptor B3 (Adgrb3) of Mus musculus (Mouse).